We begin with the raw amino-acid sequence, 515 residues long: FAD-dependent oxidoreductase domain-containing protein 1 homolog (515 aa).

The segment at 18-37 is disordered; sequence AGATSNGSGSSGGDKSGEDL. Residues 100–116 form a helical membrane-spanning segment; sequence VLIIGGGGVGSSIAYWL.

As to quaternary structure, associates with mitochondrial complex I assembly intermediates during its biogenesis. FAD is required as a cofactor.

The protein resides in the mitochondrion inner membrane. In terms of biological role, involved in the assembly of the mitochondrial membrane respiratory chain NADH dehydrogenase (Complex I). This chain is FAD-dependent oxidoreductase domain-containing protein 1 homolog, found in Drosophila melanogaster (Fruit fly).